A 347-amino-acid polypeptide reads, in one-letter code: Coproporphyrinogen-III oxidase, aerobic 2 (347 aa).

The segment at 1 to 31 (MGRHSDNSLQESANHTVLLTSPTNTIPKDSR) is disordered. Residues 7 to 31 (NSLQESANHTVLLTSPTNTIPKDSR) show a composition bias toward polar residues. The tract at residues 75-84 (VIREGRVFEQ) is important for dimerization. Serine 119 contributes to the substrate binding site. Histidine 133 acts as the Proton donor in catalysis. Residues 135 to 137 (NYR) and 305 to 310 (KGRTES) each bind substrate. Residues 287–322 (YVEFNLVYDRGTVFGLQTKGRTESILMSLPPLARWE) are important for dimerization.

The protein belongs to the aerobic coproporphyrinogen-III oxidase family. Homodimer.

The protein resides in the cytoplasm. The enzyme catalyses coproporphyrinogen III + O2 + 2 H(+) = protoporphyrinogen IX + 2 CO2 + 2 H2O. Its pathway is porphyrin-containing compound metabolism; protoporphyrin-IX biosynthesis; protoporphyrinogen-IX from coproporphyrinogen-III (O2 route): step 1/1. Its function is as follows. Key enzyme in heme biosynthesis. Catalyzes the oxidative decarboxylation of propionic acid side chains of rings A and B of coproporphyrinogen III. This chain is Coproporphyrinogen-III oxidase, aerobic 2, found in Nostoc sp. (strain PCC 7120 / SAG 25.82 / UTEX 2576).